The chain runs to 25 residues: Caerin-1.2 (25 aa).

Position 25 is a leucine amide (leucine 25).

As to expression, expressed by the skin parotoid and/or rostral glands.

The protein resides in the secreted. Functionally, antibacterial peptide, that adopts an alpha helical conformation which can disrupt bacterial membranes. Each caerin displays a different antimicrobial specificity. This chain is Caerin-1.2, found in Ranoidea caerulea (Green tree frog).